A 427-amino-acid chain; its full sequence is Nuclear distribution protein PAC1-2 (427 aa).

A LisH domain is found at 8-40; it reads QKDDLNKSIAEYLYAQDLTEIADSLCARLSLDY. A coiled-coil region spans residues 58 to 82; that stretch reads SVIRLQKKLIESENRYTALQEDIAA. 7 WD repeats span residues 106–147, 149–187, 194–233, 236–275, 278–336, 339–378, and 381–420; these read SHRA…RTLK, HTRE…NAGY, GHEH…CIRT, GHED…MKME, GHGH…ELRT, GHND…CMXV, and AHSH…SRIM.

It belongs to the WD repeat LIS1/nudF family. In terms of assembly, self-associates. Interacts with NDL1 and dynein.

It localises to the cytoplasm. The protein localises to the cytoskeleton. Its subcellular location is the spindle pole. Functionally, positively regulates the activity of the minus-end directed microtubule motor protein dynein. May enhance dynein-mediated microtubule sliding by targeting dynein to the microtubule plus end. Required for nuclear migration during vegetative growth as well as development. Required for retrograde early endosome (EE) transport from the hyphal tip. Required for localization of dynein to the mitotic spindle poles. Recruits additional proteins to the dynein complex at SPBs. This Postia placenta (strain ATCC 44394 / Madison 698-R) (Brown rot fungus) protein is Nuclear distribution protein PAC1-2.